The sequence spans 229 residues: Large ribosomal subunit protein uL1 (229 aa).

It belongs to the universal ribosomal protein uL1 family. As to quaternary structure, part of the 50S ribosomal subunit.

Functionally, binds directly to 23S rRNA. The L1 stalk is quite mobile in the ribosome, and is involved in E site tRNA release. In terms of biological role, protein L1 is also a translational repressor protein, it controls the translation of the L11 operon by binding to its mRNA. This Clostridium tetani (strain Massachusetts / E88) protein is Large ribosomal subunit protein uL1.